We begin with the raw amino-acid sequence, 2999 residues long: TPR and ankyrin repeat-containing protein 1 (2999 aa).

The disordered stretch occupies residues 1-87 (MASTTAGRRW…QPRGSTDSAC (87 aa)). The segment covering 19–36 (RGPTPRSRAPGAKLSAPE) has biased composition (low complexity). 2 TPR repeats span residues 144–177 (AMLL…DPTY) and 179–211 (KGYY…LQRS). 6 ANK repeats span residues 297–327 (EKYV…NIET), 328–361 (IGPN…EWKE), 369–405 (AGCT…DPTL), 538–567 (SQDR…DPRS), 572–593 (EGDT…DIGF), and 621–654 (NGNT…NFNL). 4 disordered regions span residues 684–722 (RRKN…LPCG), 773–831 (MPLP…GASQ), 1151–1211 (LEVE…GCVP), and 1318–1344 (WEED…QTGD). Polar residues-rich tracts occupy residues 699–717 (SRSS…TSFK) and 801–815 (TQRM…NNPV). Residues 1151 to 1164 (LEVEPGKEGPGREE) show a composition bias toward basic and acidic residues. A compositionally biased stretch (acidic residues) spans 1318–1327 (WEEDDEEVEA). TPR repeat units lie at residues 1772 to 1805 (PYEW…EKEK) and 1866 to 1899 (LGKI…DLAL).

Expressed only in the brain. Detected in the hippocampus, hypothalamus and cingulate gyrus.

The sequence is that of TPR and ankyrin repeat-containing protein 1 (Trank1) from Mus musculus (Mouse).